Consider the following 207-residue polypeptide: Putative 3-methyladenine DNA glycosylase (207 aa).

This sequence belongs to the DNA glycosylase MPG family.

In Koribacter versatilis (strain Ellin345), this protein is Putative 3-methyladenine DNA glycosylase.